The following is a 323-amino-acid chain: Viral cathepsin (323 aa).

An N-terminal signal peptide occupies residues Met1–Ser16. The propeptide at Ala17–Gly112 is activation peptide. 3 disulfides stabilise this stretch: Cys133-Cys174, Cys167-Cys207, and Cys262-Cys310. Cys136 is an active-site residue. An N-linked (GlcNAc...) asparagine; by host glycan is attached at Asn158. Catalysis depends on residues His269 and Asn289.

This sequence belongs to the peptidase C1 family. Synthesized as an inactive proenzyme and activated by proteolytic removal of the inhibitory propeptide.

The enzyme catalyses Endopeptidase of broad specificity, hydrolyzing substrates of both cathepsin L and cathepsin B.. In terms of biological role, cysteine protease that plays an essential role in host liquefaction to facilitate horizontal transmission of the virus. May participate in the degradation of foreign protein expressed by the baculovirus system. In Bombyx mori (Silk moth), this protein is Viral cathepsin (VCATH).